Here is a 118-residue protein sequence, read N- to C-terminus: MARVKRGVVARRRHKKILKLAKGYYGARSRVFRVAKQAVIKAGQYAYRDRRQRKRQFRALWIARINAGARVNGLSYSRLIAGLKKAAIEIDRKVLADLAVNEKAAFAAIVEKAKASLA.

It belongs to the bacterial ribosomal protein bL20 family.

Binds directly to 23S ribosomal RNA and is necessary for the in vitro assembly process of the 50S ribosomal subunit. It is not involved in the protein synthesizing functions of that subunit. This chain is Large ribosomal subunit protein bL20, found in Stutzerimonas stutzeri (strain A1501) (Pseudomonas stutzeri).